The following is a 491-amino-acid chain: Cytochrome P450 2H2 (491 aa).

Cys-436 is a heme binding site.

Belongs to the cytochrome P450 family. The cofactor is heme.

Its subcellular location is the endoplasmic reticulum membrane. The protein resides in the microsome membrane. It catalyses the reaction an organic molecule + reduced [NADPH--hemoprotein reductase] + O2 = an alcohol + oxidized [NADPH--hemoprotein reductase] + H2O + H(+). Cytochromes P450 are a group of heme-thiolate monooxygenases. In liver microsomes, this enzyme is involved in an NADPH-dependent electron transport pathway. It oxidizes a variety of structurally unrelated compounds, including steroids, fatty acids, and xenobiotics. This chain is Cytochrome P450 2H2 (CYP2H2), found in Gallus gallus (Chicken).